We begin with the raw amino-acid sequence, 284 residues long: Nucleotide-binding protein Pput_0988 (284 aa).

An ATP-binding site is contributed by 8–15; it reads GRSGSGKS. 60–63 lines the GTP pocket; the sequence is DARN.

The protein belongs to the RapZ-like family.

Displays ATPase and GTPase activities. The protein is Nucleotide-binding protein Pput_0988 of Pseudomonas putida (strain ATCC 700007 / DSM 6899 / JCM 31910 / BCRC 17059 / LMG 24140 / F1).